Here is a 161-residue protein sequence, read N- to C-terminus: pEARLI1-like lipid transfer protein 1 (161 aa).

The N-terminal stretch at 1–25 (MASKNSASLALFFALNILFFTLTVA) is a signal peptide. Residues 32-39 (PSPKPKPV) form an A-1 repeat. The tract at residues 32-76 (PSPKPKPVPSPKPKPVQCPPPPRPSVPSPNPRPVTPPRTPGSSGN) is disordered. Over residues 33–70 (SPKPKPVPSPKPKPVQCPPPPRPSVPSPNPRPVTPPRT) the composition is skewed to pro residues. Residues 34–49 (PKPKPVPSPKPKPVQC) are 2 X 8 AA tandem repeats A of P-S-P-K-P-K-P-V. The stretch at 40–47 (PSPKPKPV) is one A-2 repeat.

It belongs to the plant LTP family. PEARLI1 subfamily. In terms of assembly, self-interacts and binds to DIR1. Interacts with PDLP1.

Its subcellular location is the secreted. It localises to the cell wall. It is found in the endoplasmic reticulum. The protein resides in the cell junction. The protein localises to the plasmodesma. Its subcellular location is the plastid. It localises to the chloroplast. In terms of biological role, probable lipid transfer protein (LTP). Seems to control the flowering process and lignin synthesis. Together with DIR1, required for glycerol-3-phosphate- (G3P) and azelaic acid- (AA) induced systemic acquired resistance (SAR). Component of plant systemic immunity involved in priming defenses in a AA-dependent manner, by modulating production and/or translocation of a mobile signal(s) during SAR. Confers resistance to Botrytis cinerea and Pseudomonas syringae pv. tomato DC3000 and PmaDG3. May be involved in induced systemic resistance (ISR) mediated by non-pathogenic bacteria (e.g. P. fluorescens GM30). Prevents electrolyte leakage during freezing damage. The chain is pEARLI1-like lipid transfer protein 1 (AZI1) from Arabidopsis thaliana (Mouse-ear cress).